Consider the following 421-residue polypeptide: MDKFRVKGPTRLSGEVTISGAKNAALPILFAALLAEEPVELQNVPELKDIDTTIKLLNRLGTKVERNGSVFVDARDVNQYCAPYELVKTMRASIWALGPLVARFGQGQVSLPGGCAIGARPVDLHISGLEQLGAEIVLEEGYVKASVNGRLKGACIVMDKVSVGATVTIMTAATLAEGTTVIENAAREPEIEDTANFLNTLGAKITGAGTDHITIEGVERLGGGVYRVLPDRIETGTFLVAAAISGGKVVCRHAQPNTLDAVLAKLREAGADIAIGKDWVSLDMHGKRPKAVTLRTAPHPGFPTDMQAQFSLLNLVAEGAGMITETIFENRFMHIPELIRMGAHAEIESNTVLCHGVKKLSCAQVMATDLRASASLVLAGCIAEGVTVVDRIYHIDRGYEHIEDKLRGLGANIERVKSTGK.

22-23 (KN) is a binding site for phosphoenolpyruvate. Arg-91 serves as a coordination point for UDP-N-acetyl-alpha-D-glucosamine. Cys-115 acts as the Proton donor in catalysis. Position 115 is a 2-(S-cysteinyl)pyruvic acid O-phosphothioketal (Cys-115). Residues 120 to 124 (RPVDL), 160 to 163 (KVSV), Asp-305, and Ile-327 contribute to the UDP-N-acetyl-alpha-D-glucosamine site.

Belongs to the EPSP synthase family. MurA subfamily.

It is found in the cytoplasm. It catalyses the reaction phosphoenolpyruvate + UDP-N-acetyl-alpha-D-glucosamine = UDP-N-acetyl-3-O-(1-carboxyvinyl)-alpha-D-glucosamine + phosphate. Its pathway is cell wall biogenesis; peptidoglycan biosynthesis. Its function is as follows. Cell wall formation. Adds enolpyruvyl to UDP-N-acetylglucosamine. In Photorhabdus laumondii subsp. laumondii (strain DSM 15139 / CIP 105565 / TT01) (Photorhabdus luminescens subsp. laumondii), this protein is UDP-N-acetylglucosamine 1-carboxyvinyltransferase.